The primary structure comprises 372 residues: Invasion protein InvE (372 aa).

The span at 1–19 (MIPGSTSGISFSRILSRQT) shows a compositional bias: polar residues. The disordered stretch occupies residues 1–46 (MIPGSTSGISFSRILSRQTSHQDATQHTDAQQAEIQQAAEDSSPGA). Residues 21-40 (HQDATQHTDAQQAEIQQAAE) are compositionally biased toward low complexity.

The protein resides in the cell membrane. Involved in the triggering of intracellular events that lead to microbial internalization. These events include increase in calcium level, redistribution of actin microfilaments, and changes in the normal structure of the microvilli. Encoded within the type III secretion system (SPI-1 T3SS), it is essential for the translocation of protein effectors into host cells. Forms a complex with SipB and SipC in the presence of their chaperone SicA. Positively regulates the secretion of SPI-1 T3SS effector proteins SipB, SipC and SipD and negatively influences the secretion of SipA, SopA and SptP. The polypeptide is Invasion protein InvE (invE) (Salmonella typhimurium (strain LT2 / SGSC1412 / ATCC 700720)).